The chain runs to 459 residues: Cysteine--tRNA ligase (459 aa).

Residue Cys31 participates in Zn(2+) binding. Positions 33–43 match the 'HIGH' region motif; it reads PTVYYNPHIGN. Residues Cys216, His241, and Glu245 each coordinate Zn(2+). Positions 274–278 match the 'KMSKS' region motif; that stretch reads KMSKS. Lys277 contributes to the ATP binding site.

This sequence belongs to the class-I aminoacyl-tRNA synthetase family. In terms of assembly, monomer. Requires Zn(2+) as cofactor.

Its subcellular location is the cytoplasm. The catalysed reaction is tRNA(Cys) + L-cysteine + ATP = L-cysteinyl-tRNA(Cys) + AMP + diphosphate. The sequence is that of Cysteine--tRNA ligase from Rickettsia peacockii (strain Rustic).